A 311-amino-acid chain; its full sequence is MSDFTEQTLRQKLANLSNHSNSIQTTSSWLLKNHNNREIIIRVWLKTVRKENKGAKVVNLLYVANDVAQNARKACPQFKDDFFPAIESAFRHCCELKAKEVENAIGKLIHVWKERQIYSQSQCKRLQEAHQQMKLSGSFPSPAGRNNGKNSQPNQFIVEEAKKNAQDVLVSLKRLQNPPSTERDIRIQLSKYPDNISCPEKLQSVQNSEEAKALLTQNEEALPMLEDYVKRLKEETKERESLETNLNMLIQNVRMSIEHHEKLCRDVKRKEDRIKADLLEVEKTFESLPDLTAEMPNAPLPTLEALFQKRK.

A CID domain is found at 1 to 134; it reads MSDFTEQTLR…RLQEAHQQMK (134 aa). Residues 224-256 adopt a coiled-coil conformation; sequence MLEDYVKRLKEETKERESLETNLNMLIQNVRMS.

This is CID domain-containing protein 1 (cids-1) from Caenorhabditis briggsae.